The sequence spans 190 residues: Proline-rich protein 3 (190 aa).

Disordered stretches follow at residues 1 to 94 (MPKR…GLGP), 110 to 130 (PPFP…KEAR), and 142 to 161 (KNTY…SDRP). Residues 37–48 (MGPPSLLGPPPM) are compositionally biased toward pro residues. A C3H1-type zinc finger spans residues 157-185 (KSDRPVCRHFSKKGHCRYEDHCAFYHPGV).

The chain is Proline-rich protein 3 (Prr3) from Mus musculus (Mouse).